The following is a 164-amino-acid chain: MPAGHGVRARTRDLFARPFRKKGYIPLSTYLRTFKVGDYVDVKVNGAIHKGMPHKFYHGRTGRIWNVTKRAVGVEVNKQIGNRIIRKRIHVRVEHVQQSRCAEEFKLRKKQNDVLKADAKARGETISTKRQPKGPKPGFMVEGMTLETVTPIPYDVVNDLKGGY.

It belongs to the eukaryotic ribosomal protein eL21 family.

The protein is Large ribosomal subunit protein eL21x/eL21w (RPL21E) of Arabidopsis thaliana (Mouse-ear cress).